Consider the following 550-residue polypeptide: MVPPLDLGSLVDSDEEDNFSQTARGTVHVHLNPPRSEPALGWVLPCQRPNSQHRLQEVEQDVIPEDLPAPTGKYRLKYQQYASEMKDGYKQYIQRSTEKPKAASRPEATEKVEGASLDDLMTLDRKALLQQGYADSPYGRQSITRKSDVETVAIEKKKQTVAEQMMMDHLSRAVISDPEQDLNTKNQESSRVPPDSERAPLRVRRRTLHETKIRTNSALTENDLSQKVEFDGRVLSRNGRDACRELIGFFFAHDQSLTVYEYRMFGKNRTSVLPFIKKDIYHHQCGRRKGKQYELGDVYTGATLTFLSCDQPSLPKTIKENALLRLRITNIDQVALNSLKAASAEHGEEEAVSPEAHDQLVLQAIQDKLKEQLHKKGARILTGLGRYFQGLDKEGNGLLEKADFQQALKTFHLEVSEQDFESFWLILQGYGHSKNKVDYGEFKRAIFGEMNEYRKSFVRKAFMQLDFNKTGIVSVIDIRKCYCAKKHPRVISGHSTEEEIKSSFLETLKGTCSKCDEVSYGEFEDYYEGLSIGVAGDEDFVNILRIPWRI.

2 disordered regions span residues 1–20 and 175–198; these read MVPP…DNFS and ISDP…DSER. A compositionally biased stretch (polar residues) spans 181 to 190; the sequence is DLNTKNQESS. 3 EF-hand domains span residues 379 to 414, 415 to 452, and 453 to 488; these read RILT…FHLE, VSEQ…EMNE, and YRKS…KKHP. Positions 466, 468, 470, and 477 each coordinate Ca(2+).

This Mus musculus (Mouse) protein is Calcyphosin-2 (Caps2).